The primary structure comprises 209 residues: uncharacterized protein (209 aa).

Transmembrane regions (helical) follow at residues 26–48 (LRYF…GLAV), 147–169 (AYLV…PFLM), and 179–196 (IVAA…VYLL).

Its subcellular location is the cell membrane. This is an uncharacterized protein from Archaeoglobus fulgidus (strain ATCC 49558 / DSM 4304 / JCM 9628 / NBRC 100126 / VC-16).